A 231-amino-acid polypeptide reads, in one-letter code: tRNA (guanine-N(1)-)-methyltransferase (231 aa).

S-adenosyl-L-methionine-binding positions include glycine 114 and 134 to 139 (IGDYVL).

The protein belongs to the RNA methyltransferase TrmD family. As to quaternary structure, homodimer.

The protein resides in the cytoplasm. It catalyses the reaction guanosine(37) in tRNA + S-adenosyl-L-methionine = N(1)-methylguanosine(37) in tRNA + S-adenosyl-L-homocysteine + H(+). Specifically methylates guanosine-37 in various tRNAs. In Clostridioides difficile (strain 630) (Peptoclostridium difficile), this protein is tRNA (guanine-N(1)-)-methyltransferase.